The sequence spans 334 residues: Malate dehydrogenase, cytoplasmic (334 aa).

An NAD(+)-binding site is contributed by 11–17 (GAAGQIA). The substrate site is built by Arg92 and Arg98. NAD(+) is bound by residues Asn105, Gln112, and 129–131 (VGN). The substrate site is built by Asn131 and Arg162. His187 (proton acceptor) is an active-site residue.

Belongs to the LDH/MDH superfamily. MDH type 2 family. As to quaternary structure, homodimer.

It localises to the cytoplasm. Its subcellular location is the cytosol. It catalyses the reaction (S)-malate + NAD(+) = oxaloacetate + NADH + H(+). It carries out the reaction (S)-2-hydroxyglutarate + NAD(+) = 2-oxoglutarate + NADH + H(+). Functionally, catalyzes the reduction of aromatic alpha-keto acids in the presence of NADH. Plays essential roles in the malate-aspartate shuttle and the tricarboxylic acid cycle, important in mitochondrial NADH supply for oxidative phosphorylation. Catalyzes the reduction of 2-oxoglutarate to 2-hydroxyglutarate, leading to elevated reactive oxygen species (ROS). The polypeptide is Malate dehydrogenase, cytoplasmic (mdh1) (Xenopus laevis (African clawed frog)).